The following is a 1426-amino-acid chain: ABC transporter G family member 31 (1426 aa).

The ABC transporter 1 domain occupies 142–415; that stretch reads LRHLRIYRGG…FAGMGFRCPE (274 aa). 175–182 is an ATP binding site; it reads GPPSSGKT. The ABC transmembrane type-2 1 domain maps to 493 to 706; sequence ELLKSNFQWQ…AQNAISVNEF (214 aa). 7 helical membrane-spanning segments follow: residues 511-531, 544-564, 592-612, 630-650, 655-675, 681-701, and 741-761; these read FIYV…MTVF, GIIY…NGFT, LPSW…WVLV, FLLL…MASL, IVAN…GGFI, IPAW…QNAI, and IGVG…TLFL. Residues 824 to 1076 enclose the ABC transporter 2 domain; the sequence is MCFKNINYYV…NLVEFFEAIP (253 aa). An ATP-binding site is contributed by 869 to 876; it reads GVSGAGKT. An ABC transmembrane type-2 2 domain is found at 1149–1363; it reads AQYAACLWKQ…TLYGLLTSQF (215 aa). Helical transmembrane passes span 1168-1188, 1200-1220, 1245-1265, 1283-1303, 1313-1333, 1341-1363, and 1398-1418; these read YTAV…TICW, IFNA…TNAT, LPFA…QSLI, FLWY…YGMM, VAPI…GFMI, WWRW…TSQF, and VVAG…ALAI.

This sequence belongs to the ABC transporter superfamily. ABCG family. PDR (TC 3.A.1.205) subfamily.

The protein localises to the membrane. In terms of biological role, may be a general defense protein. This chain is ABC transporter G family member 31, found in Oryza sativa subsp. japonica (Rice).